Consider the following 217-residue polypeptide: Large ribosomal subunit protein uL1 (217 aa).

Position 122 is an N6,N6-dimethyllysine; alternate (Lys-122). Lys-122 carries the post-translational modification N6-methyllysine; alternate.

The protein belongs to the universal ribosomal protein uL1 family.

The protein is Large ribosomal subunit protein uL1 (rpl10a) of Dictyostelium discoideum (Social amoeba).